Here is a 333-residue protein sequence, read N- to C-terminus: Chlorophyllide reductase 35.5 kDa chain (333 aa).

The tract at residues 1 to 22 (MTDAPNLKGFDARLREEAAEEP) is disordered. ATP contacts are provided by residues 45 to 50 (GSGKSF) and lysine 74. Residue serine 49 coordinates Mg(2+). Positions 130 and 165 each coordinate [4Fe-4S] cluster. 219-220 (NK) is an ATP binding site.

The protein belongs to the NifH/BchL/ChlL family. In terms of assembly, homodimer. Chlorophyllide reductase is composed of three subunits; BchX, BchY and BchZ. It depends on [4Fe-4S] cluster as a cofactor.

It catalyses the reaction 3-deacetyl-3-vinylbacteriochlorophyllide a + 2 oxidized [2Fe-2S]-[ferredoxin] + ADP + phosphate = chlorophyllide a + 2 reduced [2Fe-2S]-[ferredoxin] + ATP + H2O + H(+). The enzyme catalyses bacteriochlorophyllide a + 2 oxidized [2Fe-2S]-[ferredoxin] + ADP + phosphate = 3-acetyl-3-devinylchlorophyllide a + 2 reduced [2Fe-2S]-[ferredoxin] + ATP + H2O + H(+). The catalysed reaction is 3-deacetyl-3-(1-hydroxyethyl)bacteriochlorophyllide a + 2 oxidized [2Fe-2S]-[ferredoxin] + ADP + phosphate = 3-devinyl-3-(1-hydroxyethyl)chlorophyllide a + 2 reduced [2Fe-2S]-[ferredoxin] + ATP + H2O + H(+). It functions in the pathway porphyrin-containing compound metabolism; bacteriochlorophyll biosynthesis. Converts chlorophylls (Chl) into bacteriochlorophylls (BChl) by reducing ring B of the tetrapyrrole. This chain is Chlorophyllide reductase 35.5 kDa chain (bchX), found in Rhodobacter capsulatus (strain ATCC BAA-309 / NBRC 16581 / SB1003).